Here is a 344-residue protein sequence, read N- to C-terminus: Protein PopA1 (344 aa).

5 disordered regions span residues 1–28, 58–108, 134–156, 211–242, and 268–311; these read MSVGNIQSPSNLPGLQNLNLNTNTNSQQ, SAGG…DANN, QPGGNDKGNGVGGANGAKGAGGQ, GNGVNGNQANGPQNAGDVNGANGADDGSEDQG, and GGGN…NLQS. 2 stretches are compositionally biased toward low complexity: residues 8 to 28 and 65 to 83; these read SPSNLPGLQNLNLNTNTNSQQ and NTGNAPAKDGNANAGANDP. Over residues 89–108 the composition is skewed to polar residues; sequence SKSQGPQSANKTGNVDDANN. Over residues 138–156 the composition is skewed to gly residues; that stretch reads NDKGNGVGGANGAKGAGGQ. Residues 215–235 show a composition bias toward low complexity; the sequence is NGNQANGPQNAGDVNGANGAD. The span at 268–279 shows a compositional bias: gly residues; that stretch reads GGGNQAQGGSKG. Low complexity predominate over residues 280–294; the sequence is AGNASPASGANPGAN. Over residues 295 to 311 the composition is skewed to polar residues; that stretch reads QPGSADDQSSGQNNLQS.

Post-translationally, popA2 and PopA3 are produced from PopA1.

The protein localises to the secreted. Acts as a specific hypersensitive response (HR) elicitor. Has activity on tobacco (non-host plant) and petunia but is without activity on tomato (host plant); PopA3 seems to be more active than a PopA1-PopA2 mixture. This chain is Protein PopA1 (popA), found in Ralstonia nicotianae (strain ATCC BAA-1114 / GMI1000) (Ralstonia solanacearum).